Consider the following 139-residue polypeptide: MKKVRIGAVVAEFNYDITHMMLELAKEHARFLDAEITRVIAVPGVFDMPLAVKKLLLEDEIDAVITLGAVIEGATDHDQIVVQHASRKIADLALDYDKPVALGISGPGMTRLEAHQRVDYAKRAVEAAVKMYRRLKEDI.

5-amino-6-(D-ribitylamino)uracil-binding positions include Phe13, 45–47 (VFD), and 69–71 (AVI). Residue 74–75 (AT) coordinates (2S)-2-hydroxy-3-oxobutyl phosphate. The active-site Proton donor is the His77. Leu102 provides a ligand contact to 5-amino-6-(D-ribitylamino)uracil. Position 117 (Arg117) interacts with (2S)-2-hydroxy-3-oxobutyl phosphate.

The protein belongs to the DMRL synthase family.

The enzyme catalyses (2S)-2-hydroxy-3-oxobutyl phosphate + 5-amino-6-(D-ribitylamino)uracil = 6,7-dimethyl-8-(1-D-ribityl)lumazine + phosphate + 2 H2O + H(+). Its pathway is cofactor biosynthesis; riboflavin biosynthesis; riboflavin from 2-hydroxy-3-oxobutyl phosphate and 5-amino-6-(D-ribitylamino)uracil: step 1/2. In terms of biological role, catalyzes the formation of 6,7-dimethyl-8-ribityllumazine by condensation of 5-amino-6-(D-ribitylamino)uracil with 3,4-dihydroxy-2-butanone 4-phosphate. This is the penultimate step in the biosynthesis of riboflavin. This chain is 6,7-dimethyl-8-ribityllumazine synthase, found in Methanothermobacter thermautotrophicus (strain ATCC 29096 / DSM 1053 / JCM 10044 / NBRC 100330 / Delta H) (Methanobacterium thermoautotrophicum).